Here is a 109-residue protein sequence, read N- to C-terminus: Enhancer of rudimentary homolog (109 aa).

The protein belongs to the E(R) family. Homodimer.

Functionally, may have a role in the cell cycle. In Arabidopsis thaliana (Mouse-ear cress), this protein is Enhancer of rudimentary homolog.